A 178-amino-acid polypeptide reads, in one-letter code: Large ribosomal subunit protein uL6 (178 aa).

It belongs to the universal ribosomal protein uL6 family. Part of the 50S ribosomal subunit.

Functionally, this protein binds to the 23S rRNA, and is important in its secondary structure. It is located near the subunit interface in the base of the L7/L12 stalk, and near the tRNA binding site of the peptidyltransferase center. In Listeria monocytogenes serotype 4a (strain HCC23), this protein is Large ribosomal subunit protein uL6.